A 112-amino-acid chain; its full sequence is uncharacterized protein (112 aa).

The helical transmembrane segment at 85–105 (IVQLIILFAIIITNPNAIELI) threads the bilayer.

It belongs to the M.jannaschii MJ0023/MJ0349/MJ1072/MJ1074/MJ1107/MJECL16 family.

Its subcellular location is the membrane. This is an uncharacterized protein from Methanocaldococcus jannaschii (strain ATCC 43067 / DSM 2661 / JAL-1 / JCM 10045 / NBRC 100440) (Methanococcus jannaschii).